Reading from the N-terminus, the 438-residue chain is Minor capsid protein p49 (438 aa).

The protein belongs to the asfivirus p49 structural protein family.

It is found in the virion. In terms of biological role, together with the penton and the other minor capsid proteins (M1249L, p17), forms a complicated network immediately below the outer capsid shell, stabilizing the whole capsid. Plays an essential role in the formation of infectious virus particles. Especially required for the formation of the capsid vertices. During virion assembly, associates with the membrane and probably mediates the docking of the penton complex to the inner membrane, where it recruits the capsomers to form the penton core. The polypeptide is Minor capsid protein p49 (Ornithodoros (relapsing fever ticks)).